A 740-amino-acid chain; its full sequence is F-BAR and double SH3 domains protein 2 (740 aa).

The F-BAR domain occupies 8–282 (VKVTQELRNI…NSSKVVRDYN (275 aa)). Residues 303-323 (PCDSDTSRQLESETGTTEEHS) form a disordered region. The span at 307–323 (DTSRQLESETGTTEEHS) shows a compositional bias: basic and acidic residues. Residues 356 to 397 (GVALSEQSRAELEQKIDEARESIRKAEIIKLKAEARLDLLKQ) adopt a coiled-coil conformation. 2 SH3 domains span residues 469–530 (NYPL…FPTS) and 567–629 (ASVC…ELSA). Positions 567–629 (ASVCFVKALY…PSVLVEELSA (63 aa)) are required and sufficient for location at clathrin-coated pits. Residues 629–645 (ASENGDTPWTREIQISP) show a composition bias toward polar residues. The interval 629–740 (ASENGDTPWT…KMEDVEITLV (112 aa)) is disordered. Over residues 646–657 (SPKPHTSLPPLP) the composition is skewed to pro residues. Phosphoserine is present on residues Ser675 and Ser681. Residues 675-706 (SQFFPRSPSANENSLHAESPGFSQASRQTPDT) are compositionally biased toward polar residues.

As to quaternary structure, homodimer. Interacts (via SH3 domain 2) with ITSN1 (via SH3 domain 4). Recruited to clathrin-coated pits during a mid-to-late stage of assembly via interaction with ITSN1. Interacts (via SH3 domain 1) with WASL. Interacts with WAS. Interacts with CASK and MAGI1. CASK inhibits interaction with MAGI1. In terms of processing, phosphorylated. Phosphorylation on a Ser residue is important for recruitment to the cell membrane and for its role in promoting endocytosis. As to expression, detected in inner ear vestibula and in stereocilia in cochlear hair cell bundles (at protein level). Ubiquitous. Detected in testis, liver, brain cortex, cerebellum, kidney, organ of Corti, utricle, spiral ganglion, tongue and eye.

The protein localises to the cytoplasm. Its subcellular location is the cell junction. It localises to the membrane. The protein resides in the clathrin-coated pit. It is found in the cell membrane. The protein localises to the cell projection. Its subcellular location is the stereocilium. Functionally, adapter protein that plays a role in endocytosis via clathrin-coated pits. Contributes to the internalization of cell surface receptors, such as integrin ITGB1 and transferrin receptor. Promotes endocytosis of EGFR in cancer cells, and thereby contributes to the down-regulation of EGFR signaling. Recruited to clathrin-coated pits during a mid-to-late stage of assembly, where it is required for normal progress from U-shaped intermediate stage pits to terminal, omega-shaped pits. Binds to membranes enriched in phosphatidylinositol 3,4-bisphosphate or phosphatidylinositol 3,4,5-trisphosphate. When bound to membranes, promotes actin polymerization via its interaction with WAS and/or WASL which leads to the activation of the Arp2/3 complex. Does not promote actin polymerisation in the absence of membranes. This is F-BAR and double SH3 domains protein 2 (Fchsd2) from Mus musculus (Mouse).